Consider the following 276-residue polypeptide: Formamidopyrimidine-DNA glycosylase (276 aa).

Pro2 functions as the Schiff-base intermediate with DNA in the catalytic mechanism. Glu3 serves as the catalytic Proton donor. The Proton donor; for beta-elimination activity role is filled by Lys58. The DNA site is built by His94, Arg112, and Arg157. Residues 242-276 (FVYDRAGQPCRVCGTPIKQIVQGQRSTYYCPTCQR) form an FPG-type zinc finger. Arg266 serves as the catalytic Proton donor; for delta-elimination activity.

It belongs to the FPG family. As to quaternary structure, monomer. Zn(2+) serves as cofactor.

It carries out the reaction Hydrolysis of DNA containing ring-opened 7-methylguanine residues, releasing 2,6-diamino-4-hydroxy-5-(N-methyl)formamidopyrimidine.. The catalysed reaction is 2'-deoxyribonucleotide-(2'-deoxyribose 5'-phosphate)-2'-deoxyribonucleotide-DNA = a 3'-end 2'-deoxyribonucleotide-(2,3-dehydro-2,3-deoxyribose 5'-phosphate)-DNA + a 5'-end 5'-phospho-2'-deoxyribonucleoside-DNA + H(+). Involved in base excision repair of DNA damaged by oxidation or by mutagenic agents. Acts as a DNA glycosylase that recognizes and removes damaged bases. Has a preference for oxidized purines, such as 7,8-dihydro-8-oxoguanine (8-oxoG). Has AP (apurinic/apyrimidinic) lyase activity and introduces nicks in the DNA strand. Cleaves the DNA backbone by beta-delta elimination to generate a single-strand break at the site of the removed base with both 3'- and 5'-phosphates. This Paraburkholderia phymatum (strain DSM 17167 / CIP 108236 / LMG 21445 / STM815) (Burkholderia phymatum) protein is Formamidopyrimidine-DNA glycosylase.